The chain runs to 310 residues: Aspartate carbamoyltransferase catalytic subunit 1 (310 aa).

The carbamoyl phosphate site is built by arginine 55 and threonine 56. Lysine 85 serves as a coordination point for L-aspartate. Carbamoyl phosphate is bound by residues arginine 106, histidine 134, and glutamine 137. The L-aspartate site is built by arginine 167 and arginine 228. Carbamoyl phosphate contacts are provided by leucine 266 and proline 267.

Belongs to the aspartate/ornithine carbamoyltransferase superfamily. ATCase family. In terms of assembly, heterododecamer (2C3:3R2) of six catalytic PyrB chains organized as two trimers (C3), and six regulatory PyrI chains organized as three dimers (R2).

It catalyses the reaction carbamoyl phosphate + L-aspartate = N-carbamoyl-L-aspartate + phosphate + H(+). The protein operates within pyrimidine metabolism; UMP biosynthesis via de novo pathway; (S)-dihydroorotate from bicarbonate: step 2/3. Catalyzes the condensation of carbamoyl phosphate and aspartate to form carbamoyl aspartate and inorganic phosphate, the committed step in the de novo pyrimidine nucleotide biosynthesis pathway. The chain is Aspartate carbamoyltransferase catalytic subunit 1 from Shewanella halifaxensis (strain HAW-EB4).